Here is a 333-residue protein sequence, read N- to C-terminus: Mycothiol acetyltransferase (333 aa).

N-acetyltransferase domains are found at residues 18-170 and 176-333; these read PTLS…LPEP and VTVR…AAAD. Glu46 is a 1D-myo-inositol 2-(L-cysteinylamino)-2-deoxy-alpha-D-glucopyranoside binding site. 98–100 is a binding site for acetyl-CoA; sequence IVV. 1D-myo-inositol 2-(L-cysteinylamino)-2-deoxy-alpha-D-glucopyranoside-binding residues include Glu203, Lys242, and Glu261. Acetyl-CoA is bound by residues 265-267 and 272-278; these read VGV and GGAGLGR. A 1D-myo-inositol 2-(L-cysteinylamino)-2-deoxy-alpha-D-glucopyranoside-binding site is contributed by Tyr299. Acetyl-CoA is bound at residue 304-309; that stretch reads NERAVR.

It belongs to the acetyltransferase family. MshD subfamily. In terms of assembly, monomer.

It carries out the reaction 1D-myo-inositol 2-(L-cysteinylamino)-2-deoxy-alpha-D-glucopyranoside + acetyl-CoA = mycothiol + CoA + H(+). Its function is as follows. Catalyzes the transfer of acetyl from acetyl-CoA to desacetylmycothiol (Cys-GlcN-Ins) to form mycothiol. In Frankia alni (strain DSM 45986 / CECT 9034 / ACN14a), this protein is Mycothiol acetyltransferase.